Here is a 520-residue protein sequence, read N- to C-terminus: Probable E3 ubiquitin-protein ligase rbrA (520 aa).

The span at 1–42 (MTDDEMYEDYDVDDDSAEESGNESLDDTEYDDAATQEFDFDE) shows a compositional bias: acidic residues. The disordered stretch occupies residues 1-51 (MTDDEMYEDYDVDDDSAEESGNESLDDTEYDDAATQEFDFDENQPQRSLGK). The segment at 135-354 (GNVSCLICLE…GGYYNCNKYD (220 aa)) is TRIAD supradomain. Residues C139, C142, C156, H158, C161, C164, C184, C189, C228, C233, C250, C252, C257, C260, H268, C273, C300, and C303 each coordinate Zn(2+). The segment at 139 to 189 (CLICLEDYPPTQTFALICNHRYCLPCYKNYLEIKVSEGPECIYTPCPAPKC) adopts an RING-type 1 zinc-finger fold. Residues 208–273 (ERFNNFILKS…EIGDHMPCPC (66 aa)) form an IBR-type zinc finger. The segment at 300-333 (CPECRSPIEKNGGCMHMTCRKNAGGCGFEFCWLC) adopts an RING-type 2; atypical zinc-finger fold. C313 is a catalytic residue. The Zn(2+) site is built by C318, C325, C330, C333, H340, and C350.

The protein belongs to the RBR family.

It carries out the reaction [E2 ubiquitin-conjugating enzyme]-S-ubiquitinyl-L-cysteine + [acceptor protein]-L-lysine = [E2 ubiquitin-conjugating enzyme]-L-cysteine + [acceptor protein]-N(6)-ubiquitinyl-L-lysine.. It functions in the pathway protein modification; protein ubiquitination. Might act as an E3 ubiquitin-protein ligase. Appears to be required for normal cell-type proportioning and cell sorting during multicellular development. In addition to being necessary for a normal percentage of prestalk cells and the organization of the slug, rbrA is also necessary for spore cell viability. This chain is Probable E3 ubiquitin-protein ligase rbrA (rbrA), found in Dictyostelium discoideum (Social amoeba).